Reading from the N-terminus, the 817-residue chain is MLRFPTCFPSFRVVGEKQLPQEIIFLVWSPKRDLIALANTAGEVLLHRLASFHRVWSFPPNENTGKEVTCLAWRPDGKLLAFALADTKKIVLCDVEKPGSLHSFSVEAPVSCMHWMEVTVESSVLTSFYNAEDESNLLLPKLPTLPKNYSSTSKIFSEENSDEIIKLLGDVRLNILVLGGSSGFIELYAYGMFKIARVTGIAGTCLALCLSSDLKSLSVVTEVSTNGASEVSYFQLETNLLYSFLPEVTRMARKFTHISALLQYINLSLTCMCEAWEEILMQMDSRLTKFVQEKNTTTSVQDEFMHLLLWGKASAELQTLLMNQLTVKGLKKLGQSIESSYSSIQKLVISHLQSGSESLLYHLSELKGLASWKQKYEPLGLDAAGIEEAITAVGSFILKANELLQVIDSSMKNFKAFFRWLYVAMLRMTEDHVLPELNKMTQKDITFVAEFLTEHFNEAPDLYNRKGKYFNVERVGQYLKDEDDDLVSPPNTEGNQWYDFLQNSSHLKESPLLFPYYPRKSLHFVKRRMENIIDQCLQKPADVIGKSMNQAICIPLYRDTRSEDSIRRLFKFPFLWNNKTSNLHYLLFTILEDSLYKMCILRRHTDISQSVSNGLIAIKFGSFTYATTEKVRRSIYSCLDAQFYDDETVTVVLKDTVGREGRDRLLVQLPLSLVYNSEDSAEYQFTGTYSTRLDEQCSAIPTRTMHFEKHWRLLESMKAQYVAGNGFRKVSCVLSSNLRHVRVFEMDIDDEWELDESSDEEEEASNKPVKIKEEVLSESEAENQQAGAAALAPEIVIKVEKLDPELDSQSSLPLLCV.

Tyrosine 469 is modified (phosphotyrosine). Phosphoserine occurs at positions 757 and 758. Residue lysine 772 forms a Glycyl lysine isopeptide (Lys-Gly) (interchain with G-Cter in SUMO2) linkage. Phosphoserine occurs at positions 777 and 779. Lysine 798 participates in a covalent cross-link: Glycyl lysine isopeptide (Lys-Gly) (interchain with G-Cter in SUMO2).

It belongs to the APC4 family. In terms of assembly, the mammalian APC/C is composed at least of 14 distinct subunits ANAPC1, ANAPC2, CDC27/APC3, ANAPC4, ANAPC5, CDC16/APC6, ANAPC7, CDC23/APC8, ANAPC10, ANAPC11, CDC26/APC12, ANAPC13, ANAPC15 and ANAPC16 that assemble into a complex of at least 19 chains with a combined molecular mass of around 1.2 MDa; APC/C interacts with FZR1 and FBXO5. In the context of the APC/C complex, directly interacts with UBE2S.

The protein localises to the nucleus. Its pathway is protein modification; protein ubiquitination. Its function is as follows. Component of the anaphase promoting complex/cyclosome (APC/C), a cell cycle-regulated E3 ubiquitin ligase that controls progression through mitosis and the G1 phase of the cell cycle. The APC/C complex acts by mediating ubiquitination and subsequent degradation of target proteins: it mainly mediates the formation of 'Lys-11'-linked polyubiquitin chains and, to a lower extent, the formation of 'Lys-48'- and 'Lys-63'-linked polyubiquitin chains. The APC/C complex catalyzes assembly of branched 'Lys-11'-/'Lys-48'-linked branched ubiquitin chains on target proteins. The sequence is that of Anaphase-promoting complex subunit 4 (ANAPC4) from Pongo abelii (Sumatran orangutan).